The following is a 121-amino-acid chain: Small ribosomal subunit protein uS13 (121 aa).

The interval 97–121 (VRGQRTRTNARTRRGARKTVAGRKK) is disordered. Positions 100 to 121 (QRTRTNARTRRGARKTVAGRKK) are enriched in basic residues.

It belongs to the universal ribosomal protein uS13 family. As to quaternary structure, part of the 30S ribosomal subunit. Forms a loose heterodimer with protein S19. Forms two bridges to the 50S subunit in the 70S ribosome.

In terms of biological role, located at the top of the head of the 30S subunit, it contacts several helices of the 16S rRNA. In the 70S ribosome it contacts the 23S rRNA (bridge B1a) and protein L5 of the 50S subunit (bridge B1b), connecting the 2 subunits; these bridges are implicated in subunit movement. Contacts the tRNAs in the A and P-sites. The polypeptide is Small ribosomal subunit protein uS13 (Prochlorococcus marinus (strain NATL2A)).